The primary structure comprises 412 residues: MDALKRYDPEVFAAIQQEVERQQRNIELIASENFVPKAVLEAAGTVLTNKYAEGYPGRRYYGGCEYVDIVENIARERLKAAFGAEHVNVQPHSGANANTAVYFAFLQPGDTVLGMNLAQGGHLTHGSPVNFSGRTYNFVPYGLDPETERINMDQVAELARQHRPKLIVAGYSAYPRVLDFKRFREIAEEVGAILMVDMAHFAGLAATGYYPNPVEHAHVVTTTTHKTLRGPRGGAILCKKEFAKEIDKAVFPGMQGGPLMHIIAAKAVAFKQLSDPDYRAYCGQVVKNAKALAQALLERGYRLVTGGTDNHLMLVDLRPKGITGRDAEHLLDRVSITVNKNAIPNDPEKPMVTSGIRIGTPAMTTRGMKEAEMVQIADLIDRAITHRNDEAELDRIRAEVHELTARFPLYAD.

Residues L117 and 121–123 each bind (6S)-5,6,7,8-tetrahydrofolate; that span reads GHL. An N6-(pyridoxal phosphate)lysine modification is found at K226.

It belongs to the SHMT family. In terms of assembly, homodimer. The cofactor is pyridoxal 5'-phosphate.

It localises to the cytoplasm. It catalyses the reaction (6R)-5,10-methylene-5,6,7,8-tetrahydrofolate + glycine + H2O = (6S)-5,6,7,8-tetrahydrofolate + L-serine. Its pathway is one-carbon metabolism; tetrahydrofolate interconversion. The protein operates within amino-acid biosynthesis; glycine biosynthesis; glycine from L-serine: step 1/1. Its function is as follows. Catalyzes the reversible interconversion of serine and glycine with tetrahydrofolate (THF) serving as the one-carbon carrier. This reaction serves as the major source of one-carbon groups required for the biosynthesis of purines, thymidylate, methionine, and other important biomolecules. Also exhibits THF-independent aldolase activity toward beta-hydroxyamino acids, producing glycine and aldehydes, via a retro-aldol mechanism. The polypeptide is Serine hydroxymethyltransferase (Symbiobacterium thermophilum (strain DSM 24528 / JCM 14929 / IAM 14863 / T)).